A 335-amino-acid chain; its full sequence is Tetraacyldisaccharide 4'-kinase (335 aa).

Residue 51-58 (HVGGAGKT) participates in ATP binding.

Belongs to the LpxK family.

The catalysed reaction is a lipid A disaccharide + ATP = a lipid IVA + ADP + H(+). Its pathway is glycolipid biosynthesis; lipid IV(A) biosynthesis; lipid IV(A) from (3R)-3-hydroxytetradecanoyl-[acyl-carrier-protein] and UDP-N-acetyl-alpha-D-glucosamine: step 6/6. In terms of biological role, transfers the gamma-phosphate of ATP to the 4'-position of a tetraacyldisaccharide 1-phosphate intermediate (termed DS-1-P) to form tetraacyldisaccharide 1,4'-bis-phosphate (lipid IVA). This chain is Tetraacyldisaccharide 4'-kinase, found in Bradyrhizobium sp. (strain ORS 278).